Reading from the N-terminus, the 232-residue chain is Ribonuclease 3 (232 aa).

The RNase III domain maps to 5 to 134 (QTVLKNHFAI…FLGALLLDKD (130 aa)). Position 47 (Glu47) interacts with Mg(2+). Residue Asp51 is part of the active site. Mg(2+) contacts are provided by Asp120 and Glu123. Residue Glu123 is part of the active site. Positions 160 to 229 (DYKTHLQELL…AKNAVEKGLD (70 aa)) constitute a DRBM domain.

Belongs to the ribonuclease III family. In terms of assembly, homodimer. It depends on Mg(2+) as a cofactor.

The protein resides in the cytoplasm. It catalyses the reaction Endonucleolytic cleavage to 5'-phosphomonoester.. Its function is as follows. Digests double-stranded RNA. Involved in the processing of primary rRNA transcript to yield the immediate precursors to the large and small rRNAs (23S and 16S). Processes some mRNAs, and tRNAs when they are encoded in the rRNA operon. Processes pre-crRNA and tracrRNA of type II CRISPR loci if present in the organism. The sequence is that of Ribonuclease 3 from Streptococcus pneumoniae (strain Hungary19A-6).